A 967-amino-acid chain; its full sequence is Protein moonraker (967 aa).

A disordered region spans residues 178–201 (SHPGQSDLTVPNSPPTHDPGLQPH). Residues 179-188 (HPGQSDLTVP) show a composition bias toward polar residues. A phosphoserine mark is found at S287 and S409. 2 disordered regions span residues 401–431 (ALER…SRPS) and 490–601 (KAGK…SHLT). Polar residues predominate over residues 525 to 543 (QSQPHSKSRVQQTTVSSRL). Residues 557-568 (WIPPNPTSPPAS) show a composition bias toward pro residues. Residues 616-642 (AETSKRLKELEELKAKEIDSMQKQRLD) are a coiled coil. Residues S700 and S826 each carry the phosphoserine modification. The tract at residues 849-872 (RPCNGNSLDESVGTEEGSEKREAP) is disordered. Residues 885–967 (GRAPLFVPPG…FTSEFLEAAT (83 aa)) form a necessary and sufficient for CEP20-binding region.

Interacts with CEP63. Interacts with WDR62. Forms a complex with OFD1 and CEP20/FOR20. Interacts with PCM1.

Its subcellular location is the cytoplasm. It localises to the cytoskeleton. It is found in the microtubule organizing center. The protein resides in the centrosome. The protein localises to the centriole. Its subcellular location is the centriolar satellite. Involved in centriole duplication. Positively regulates CEP63 centrosomal localization. Required for WDR62 centrosomal localization and promotes the centrosomal localization of CDK2. May play a role in cilium assembly. In Homo sapiens (Human), this protein is Protein moonraker (KIAA0753).